A 189-amino-acid polypeptide reads, in one-letter code: Probable nicotinate-nucleotide adenylyltransferase (189 aa).

Belongs to the NadD family.

The enzyme catalyses nicotinate beta-D-ribonucleotide + ATP + H(+) = deamido-NAD(+) + diphosphate. It functions in the pathway cofactor biosynthesis; NAD(+) biosynthesis; deamido-NAD(+) from nicotinate D-ribonucleotide: step 1/1. Functionally, catalyzes the reversible adenylation of nicotinate mononucleotide (NaMN) to nicotinic acid adenine dinucleotide (NaAD). The polypeptide is Probable nicotinate-nucleotide adenylyltransferase (Cereibacter sphaeroides (strain ATCC 17023 / DSM 158 / JCM 6121 / CCUG 31486 / LMG 2827 / NBRC 12203 / NCIMB 8253 / ATH 2.4.1.) (Rhodobacter sphaeroides)).